The following is a 178-amino-acid chain: CDP-diacylglycerol--glycerol-3-phosphate 3-phosphatidyltransferase (178 aa).

Transmembrane regions (helical) follow at residues 5–25 (PNYL…LFYI), 32–52 (KLGA…GYIA), 61–81 (FGKM…TIML), and 145–165 (IIYL…LTII).

This sequence belongs to the CDP-alcohol phosphatidyltransferase class-I family.

It is found in the cell membrane. It catalyses the reaction a CDP-1,2-diacyl-sn-glycerol + sn-glycerol 3-phosphate = a 1,2-diacyl-sn-glycero-3-phospho-(1'-sn-glycero-3'-phosphate) + CMP + H(+). Its pathway is phospholipid metabolism; phosphatidylglycerol biosynthesis; phosphatidylglycerol from CDP-diacylglycerol: step 1/2. Functionally, this protein catalyzes the committed step to the synthesis of the acidic phospholipids. The chain is CDP-diacylglycerol--glycerol-3-phosphate 3-phosphatidyltransferase (pgsA) from Rickettsia typhi (strain ATCC VR-144 / Wilmington).